A 262-amino-acid polypeptide reads, in one-letter code: Carbonic anhydrase 13 (262 aa).

In terms of domain architecture, Alpha-carbonic anhydrase spans 4–261 (LSWGYGEHNG…LKGRRVRASF (258 aa)). His65 (proton donor/acceptor) is an active-site residue. The Zn(2+) site is built by His95, His97, and His120. 200–201 (TV) contributes to the substrate binding site.

This sequence belongs to the alpha-carbonic anhydrase family. Zn(2+) serves as cofactor. In terms of tissue distribution, expressed in spleen, lung, kidney, heart, brain, skeletal muscle and testis.

It catalyses the reaction hydrogencarbonate + H(+) = CO2 + H2O. Inhibited by coumarins, sulfonamide derivatives such as acetazolamide (AZA) and Foscarnet (phosphonoformate trisodium salt). Reversible hydration of carbon dioxide. In Mus musculus (Mouse), this protein is Carbonic anhydrase 13 (Ca13).